Consider the following 569-residue polypeptide: Synaptotagmin-4 (569 aa).

The helical transmembrane segment at 1 to 21 threads the bilayer; the sequence is MGFLFGLFIGIAVSFGLVVAF. The SMP-LTD domain occupies 67–251; that stretch reads QRQKLNWLNL…WPVRKIIPIL (185 aa). A phospholipid binding region spans residues 229–531; sequence EETIRDAIED…KIGRVIMTLT (303 aa). 2 C2 domains span residues 245–366 and 426–543; these read RKII…DIWL and TDMK…QEWF. The Ca(2+) site is built by Asp-459, Asp-465, Asp-514, Asp-516, and Asp-521.

It belongs to the synaptotagmin family. Requires Ca(2+) as cofactor.

The protein localises to the membrane. Functionally, may be involved in membrane trafficking. In Arabidopsis thaliana (Mouse-ear cress), this protein is Synaptotagmin-4 (SYT4).